The following is a 359-amino-acid chain: Non-functional pseudokinase ZRK2 (359 aa).

Residues Met-1–Gln-10 are compositionally biased toward basic residues. Residues Met-1–Arg-20 form a disordered region. The Protein kinase domain maps to Leu-64–Phe-356. Residues Phe-70–Ala-78 and Lys-97 contribute to the ATP site.

This sequence belongs to the protein kinase superfamily. Ser/Thr protein kinase family. ZRK subfamily.

This chain is Non-functional pseudokinase ZRK2, found in Arabidopsis thaliana (Mouse-ear cress).